The following is a 217-amino-acid chain: ATP phosphoribosyltransferase (217 aa).

Belongs to the ATP phosphoribosyltransferase family. Short subfamily. In terms of assembly, heteromultimer composed of HisG and HisZ subunits.

The protein resides in the cytoplasm. The enzyme catalyses 1-(5-phospho-beta-D-ribosyl)-ATP + diphosphate = 5-phospho-alpha-D-ribose 1-diphosphate + ATP. It functions in the pathway amino-acid biosynthesis; L-histidine biosynthesis; L-histidine from 5-phospho-alpha-D-ribose 1-diphosphate: step 1/9. In terms of biological role, catalyzes the condensation of ATP and 5-phosphoribose 1-diphosphate to form N'-(5'-phosphoribosyl)-ATP (PR-ATP). Has a crucial role in the pathway because the rate of histidine biosynthesis seems to be controlled primarily by regulation of HisG enzymatic activity. The protein is ATP phosphoribosyltransferase of Burkholderia vietnamiensis (strain G4 / LMG 22486) (Burkholderia cepacia (strain R1808)).